Here is a 293-residue protein sequence, read N- to C-terminus: Acetyl-coenzyme A carboxylase carboxyl transferase subunit beta (293 aa).

In terms of domain architecture, CoA carboxyltransferase N-terminal spans 29-293 (LWVKCPECGQ…GCKAKKAAGK (265 aa)). Residues Cys-33, Cys-36, Cys-52, and Cys-55 each contribute to the Zn(2+) site. Residues 33–55 (CPECGQVVYRKDLHANASVCSNC) form a C4-type zinc finger.

This sequence belongs to the AccD/PCCB family. Acetyl-CoA carboxylase is a heterohexamer composed of biotin carboxyl carrier protein (AccB), biotin carboxylase (AccC) and two subunits each of ACCase subunit alpha (AccA) and ACCase subunit beta (AccD). It depends on Zn(2+) as a cofactor.

It is found in the cytoplasm. It catalyses the reaction N(6)-carboxybiotinyl-L-lysyl-[protein] + acetyl-CoA = N(6)-biotinyl-L-lysyl-[protein] + malonyl-CoA. The protein operates within lipid metabolism; malonyl-CoA biosynthesis; malonyl-CoA from acetyl-CoA: step 1/1. Component of the acetyl coenzyme A carboxylase (ACC) complex. Biotin carboxylase (BC) catalyzes the carboxylation of biotin on its carrier protein (BCCP) and then the CO(2) group is transferred by the transcarboxylase to acetyl-CoA to form malonyl-CoA. This is Acetyl-coenzyme A carboxylase carboxyl transferase subunit beta from Prochlorococcus marinus (strain MIT 9303).